Reading from the N-terminus, the 577-residue chain is Arginine--tRNA ligase (577 aa).

The 'HIGH' region signature appears at 122-132 (PNVAKEMHVGH).

Belongs to the class-I aminoacyl-tRNA synthetase family. In terms of assembly, monomer.

It is found in the cytoplasm. It carries out the reaction tRNA(Arg) + L-arginine + ATP = L-arginyl-tRNA(Arg) + AMP + diphosphate. This is Arginine--tRNA ligase from Escherichia coli O6:K15:H31 (strain 536 / UPEC).